A 123-amino-acid polypeptide reads, in one-letter code: Small ribosomal subunit protein bS16 (123 aa).

The disordered stretch occupies residues 79 to 123; that stretch reads AGIAKRPSRNNPTKGEPGKKAQERLALAKQAEEEAAAKAAEAASE.

It belongs to the bacterial ribosomal protein bS16 family.

The protein is Small ribosomal subunit protein bS16 of Brucella melitensis biotype 2 (strain ATCC 23457).